Here is a 334-residue protein sequence, read N- to C-terminus: Holliday junction branch migration complex subunit RuvB (334 aa).

The segment at Met1–Tyr179 is large ATPase domain (RuvB-L). ATP contacts are provided by residues Leu18, Arg19, Gly60, Lys63, Thr64, Ser65, Glu126–Phe128, Arg169, Tyr179, and Arg216. Position 64 (Thr64) interacts with Mg(2+). Positions Thr180–Leu250 are small ATPAse domain (RuvB-S). A head domain (RuvB-H) region spans residues Asn253–Glu334. 2 residues coordinate DNA: Arg308 and Arg313.

It belongs to the RuvB family. In terms of assembly, homohexamer. Forms an RuvA(8)-RuvB(12)-Holliday junction (HJ) complex. HJ DNA is sandwiched between 2 RuvA tetramers; dsDNA enters through RuvA and exits via RuvB. An RuvB hexamer assembles on each DNA strand where it exits the tetramer. Each RuvB hexamer is contacted by two RuvA subunits (via domain III) on 2 adjacent RuvB subunits; this complex drives branch migration. In the full resolvosome a probable DNA-RuvA(4)-RuvB(12)-RuvC(2) complex forms which resolves the HJ.

It localises to the cytoplasm. It carries out the reaction ATP + H2O = ADP + phosphate + H(+). Its function is as follows. The RuvA-RuvB-RuvC complex processes Holliday junction (HJ) DNA during genetic recombination and DNA repair, while the RuvA-RuvB complex plays an important role in the rescue of blocked DNA replication forks via replication fork reversal (RFR). RuvA specifically binds to HJ cruciform DNA, conferring on it an open structure. The RuvB hexamer acts as an ATP-dependent pump, pulling dsDNA into and through the RuvAB complex. RuvB forms 2 homohexamers on either side of HJ DNA bound by 1 or 2 RuvA tetramers; 4 subunits per hexamer contact DNA at a time. Coordinated motions by a converter formed by DNA-disengaged RuvB subunits stimulates ATP hydrolysis and nucleotide exchange. Immobilization of the converter enables RuvB to convert the ATP-contained energy into a lever motion, pulling 2 nucleotides of DNA out of the RuvA tetramer per ATP hydrolyzed, thus driving DNA branch migration. The RuvB motors rotate together with the DNA substrate, which together with the progressing nucleotide cycle form the mechanistic basis for DNA recombination by continuous HJ branch migration. Branch migration allows RuvC to scan DNA until it finds its consensus sequence, where it cleaves and resolves cruciform DNA. This is Holliday junction branch migration complex subunit RuvB from Chlamydia trachomatis serovar L2 (strain ATCC VR-902B / DSM 19102 / 434/Bu).